A 577-amino-acid polypeptide reads, in one-letter code: Urease subunit alpha (577 aa).

The Urease domain occupies Gly136–Phe577. Residues His141, His143, and Lys224 each coordinate Ni(2+). Lys224 carries the N6-carboxylysine modification. His226 contributes to the substrate binding site. 2 residues coordinate Ni(2+): His253 and His279. Residue His327 is the Proton donor of the active site. Asp367 contributes to the Ni(2+) binding site.

Belongs to the metallo-dependent hydrolases superfamily. Urease alpha subunit family. As to quaternary structure, heterotrimer of UreA (gamma), UreB (beta) and UreC (alpha) subunits. Three heterotrimers associate to form the active enzyme. The cofactor is Ni cation. In terms of processing, carboxylation allows a single lysine to coordinate two nickel ions.

It localises to the cytoplasm. The catalysed reaction is urea + 2 H2O + H(+) = hydrogencarbonate + 2 NH4(+). It functions in the pathway nitrogen metabolism; urea degradation; CO(2) and NH(3) from urea (urease route): step 1/1. The polypeptide is Urease subunit alpha (Mycobacteroides abscessus (strain ATCC 19977 / DSM 44196 / CCUG 20993 / CIP 104536 / JCM 13569 / NCTC 13031 / TMC 1543 / L948) (Mycobacterium abscessus)).